The chain runs to 102 residues: NADH-quinone oxidoreductase subunit K (102 aa).

3 helical membrane-spanning segments follow: residues 6 to 26 (MEHGLLLAAILFCIGLCGLLI), 30 to 50 (LLFILMSIEIMMNASALAFVV), and 65 to 85 (ILVISLAAAEASIGLALLLLL).

The protein belongs to the complex I subunit 4L family. NDH-1 is composed of 14 different subunits. Subunits NuoA, H, J, K, L, M, N constitute the membrane sector of the complex.

The protein resides in the cell inner membrane. It catalyses the reaction a quinone + NADH + 5 H(+)(in) = a quinol + NAD(+) + 4 H(+)(out). NDH-1 shuttles electrons from NADH, via FMN and iron-sulfur (Fe-S) centers, to quinones in the respiratory chain. The immediate electron acceptor for the enzyme in this species is believed to be ubiquinone. Couples the redox reaction to proton translocation (for every two electrons transferred, four hydrogen ions are translocated across the cytoplasmic membrane), and thus conserves the redox energy in a proton gradient. In Aeromonas salmonicida (strain A449), this protein is NADH-quinone oxidoreductase subunit K.